The primary structure comprises 572 residues: Asparagine synthetase [glutamine-hydrolyzing] 1 (572 aa).

Catalysis depends on Cys2, which acts as the For GATase activity. Residues 2 to 186 (CGIFAAFRHE…PGHVYDSKTD (185 aa)) form the Glutamine amidotransferase type-2 domain. Residues 49 to 53 (RLAIV), 74 to 76 (NGE), and Asp97 contribute to the L-glutamine site. The region spanning 194-546 (PDWLDEKRIP…QKTVADTVMR (353 aa)) is the Asparagine synthetase domain. Leu233 contributes to the ATP binding site. Ser265 bears the Phosphoserine mark. ATP-binding positions include Ile292 and 366 to 367 (SG). Ser509 is subject to Phosphoserine.

The enzyme catalyses L-aspartate + L-glutamine + ATP + H2O = L-asparagine + L-glutamate + AMP + diphosphate + H(+). Its pathway is amino-acid biosynthesis; L-asparagine biosynthesis; L-asparagine from L-aspartate (L-Gln route): step 1/1. This chain is Asparagine synthetase [glutamine-hydrolyzing] 1 (ASN1), found in Saccharomyces cerevisiae (strain ATCC 204508 / S288c) (Baker's yeast).